Here is a 196-residue protein sequence, read N- to C-terminus: MTRLGKQFFTAPTLALTERLLGKIFVRITPSGTVLKGRIVETEAYLGHNDEACHAWRKKTERNRVMFEAPGTLYVYFSYGCHHLLNIVTEPEGTAGAVLIRAMEPVEGIPCMQERRQTTVETALMSGPAKLTSALGVERSSSGRDLFGNEFFLLDAPSPQPSMICTSTRVGISRSRELPWRKYLADSPHVSKGRPS.

The protein belongs to the DNA glycosylase MPG family.

This Chlorobium luteolum (strain DSM 273 / BCRC 81028 / 2530) (Pelodictyon luteolum) protein is Putative 3-methyladenine DNA glycosylase.